Reading from the N-terminus, the 680-residue chain is Extracellular matrix protein 2 (680 aa).

The signal sequence occupies residues 1–20 (MKFSSLYCFLLLLIFQTDFG). The VWFC domain occupies 100 to 157 (GHCLANGMIMYNKAVWSPEPCTTCLCLNGKVLCDETKCHPQMCPQTIIPEGECCPVCS). A compositionally biased stretch (acidic residues) spans 189–198 (QLEEDEEEVK). The interval 189–293 (QLEEDEEEVK…RLPIPATPRG (105 aa)) is disordered. Over residues 223 to 238 (QSREGKAQRPEEEGRQ) the composition is skewed to basic and acidic residues. Over residues 249 to 272 (NEEDDDEEEEDDDDEEEDDDDEDE) the composition is skewed to acidic residues. Positions 275-277 (RGD) match the Cell attachment site motif. The 38-residue stretch at 288–325 (PATPRGIPSLPSMCSLSYKTISCISADLTQIPPLTAPE) folds into the LRRNT domain. LRR repeat units follow at residues 349-369 (NLER…GPKA), 375-396 (NLMR…LPST), 397-417 (LEEL…SLSD), 420-440 (QLVT…NSLA), 446-466 (SLSY…GLPA), 467-488 (SIEE…SFNH), 491-511 (KINV…APLA), 517-538 (NLES…LPKS), 539-559 (LVHL…VFGH), 563-583 (GLEY…DRVS), 590-611 (SLRE…VQEM), 613-634 (ALHF…QICN), and 642-665 (NLQH…AFSC). N-linked (GlcNAc...) asparagine glycosylation is present at Asn359. Asn430 carries an N-linked (GlcNAc...) asparagine glycan. N-linked (GlcNAc...) asparagine glycosylation is present at Asn487.

It belongs to the small leucine-rich proteoglycan (SLRP) family. SLRP class I subfamily. Interacts with numerous extracellular matrix proteins. Interacts with MSL1 and RASSF1.

The protein localises to the secreted. The protein resides in the extracellular space. It is found in the extracellular matrix. Functionally, promotes matrix assembly and cell adhesiveness. The chain is Extracellular matrix protein 2 (ECM2) from Bos taurus (Bovine).